We begin with the raw amino-acid sequence, 609 residues long: Probable ubiquitin-conjugating enzyme E2 25 (609 aa).

Disordered stretches follow at residues 70–99 (EEDE…LDPE) and 151–185 (ADKE…SQFS). Over residues 156–178 (ASSSKSSHANNGNNSSKKATKAS) the composition is skewed to low complexity. In terms of domain architecture, UBC core spans 332–492 (DWAKRIQDEW…TFILSLKTMV (161 aa)). Cys-418 (glycyl thioester intermediate) is an active-site residue.

Belongs to the ubiquitin-conjugating enzyme family. In terms of tissue distribution, expressed in seeds, pistils, siliques, hypocotyls and leaves.

It catalyses the reaction S-ubiquitinyl-[E1 ubiquitin-activating enzyme]-L-cysteine + [E2 ubiquitin-conjugating enzyme]-L-cysteine = [E1 ubiquitin-activating enzyme]-L-cysteine + S-ubiquitinyl-[E2 ubiquitin-conjugating enzyme]-L-cysteine.. It participates in protein modification; protein ubiquitination. Functionally, accepts the ubiquitin from the E1 complex and catalyzes its covalent attachment to other proteins. The sequence is that of Probable ubiquitin-conjugating enzyme E2 25 (UBC25) from Arabidopsis thaliana (Mouse-ear cress).